The primary structure comprises 306 residues: Ribonuclease Z (306 aa).

The Zn(2+) site is built by H63, H65, D67, H68, H142, D213, and H271. D67 functions as the Proton acceptor in the catalytic mechanism.

Belongs to the RNase Z family. In terms of assembly, homodimer. The cofactor is Zn(2+).

The catalysed reaction is Endonucleolytic cleavage of RNA, removing extra 3' nucleotides from tRNA precursor, generating 3' termini of tRNAs. A 3'-hydroxy group is left at the tRNA terminus and a 5'-phosphoryl group is left at the trailer molecule.. Its function is as follows. Zinc phosphodiesterase, which displays some tRNA 3'-processing endonuclease activity. Probably involved in tRNA maturation, by removing a 3'-trailer from precursor tRNA. The polypeptide is Ribonuclease Z (Oceanobacillus iheyensis (strain DSM 14371 / CIP 107618 / JCM 11309 / KCTC 3954 / HTE831)).